We begin with the raw amino-acid sequence, 343 residues long: GTPase Obg (343 aa).

Positions Met-1–Leu-159 constitute an Obg domain. The OBG-type G domain maps to Ala-160 to Glu-334. Residues Gly-166–Ser-173, Phe-191–Tyr-195, Asp-213–Gly-216, Asn-284–Asp-287, and Ser-315–Leu-317 contribute to the GTP site. The Mg(2+) site is built by Ser-173 and Thr-193.

It belongs to the TRAFAC class OBG-HflX-like GTPase superfamily. OBG GTPase family. As to quaternary structure, monomer. Mg(2+) serves as cofactor.

Its subcellular location is the cytoplasm. Its function is as follows. An essential GTPase which binds GTP, GDP and possibly (p)ppGpp with moderate affinity, with high nucleotide exchange rates and a fairly low GTP hydrolysis rate. Plays a role in control of the cell cycle, stress response, ribosome biogenesis and in those bacteria that undergo differentiation, in morphogenesis control. The sequence is that of GTPase Obg from Nitrosomonas eutropha (strain DSM 101675 / C91 / Nm57).